Consider the following 554-residue polypeptide: Kinesin-like protein 3 (554 aa).

The region spanning 3 to 325 is the Kinesin motor domain; sequence SIKVVCRIRP…LRFGHRAKSI (323 aa). Residues 84–91 and 233–240 contribute to the ATP site; these read GQTGSGKT and GSESVGKS. Positions 446-473 form a coiled coil; the sequence is LSSTKQQLSDLMTALGDAQERYVELVKN.

The protein belongs to the TRAFAC class myosin-kinesin ATPase superfamily. Kinesin family.

The protein resides in the cytoplasm. The protein localises to the cytoskeleton. Functionally, cytoplasmic motor that could play a role in Golgi membrane recycling. The protein is Kinesin-like protein 3 (klp3) of Schizosaccharomyces pombe (strain 972 / ATCC 24843) (Fission yeast).